The following is a 96-amino-acid chain: Co-chaperonin GroES (96 aa).

It belongs to the GroES chaperonin family. As to quaternary structure, heptamer of 7 subunits arranged in a ring. Interacts with the chaperonin GroEL.

It localises to the cytoplasm. Together with the chaperonin GroEL, plays an essential role in assisting protein folding. The GroEL-GroES system forms a nano-cage that allows encapsulation of the non-native substrate proteins and provides a physical environment optimized to promote and accelerate protein folding. GroES binds to the apical surface of the GroEL ring, thereby capping the opening of the GroEL channel. The sequence is that of Co-chaperonin GroES from Leptospira borgpetersenii serovar Hardjo-bovis (strain JB197).